Here is a 356-residue protein sequence, read N- to C-terminus: Glycerol-1-phosphate dehydrogenase [NAD(P)+] (356 aa).

Residues 103–107 and 125–128 contribute to the NAD(+) site; these read GRSID and TAAS. Asp-130 contributes to the substrate binding site. NAD(+) is bound at residue Ser-134. Asp-177 contributes to the substrate binding site. 2 residues coordinate Zn(2+): Asp-177 and His-257. His-261 lines the substrate pocket. Residue His-273 participates in Zn(2+) binding.

This sequence belongs to the glycerol-1-phosphate dehydrogenase family. Zn(2+) serves as cofactor.

The protein resides in the cytoplasm. The catalysed reaction is sn-glycerol 1-phosphate + NAD(+) = dihydroxyacetone phosphate + NADH + H(+). It catalyses the reaction sn-glycerol 1-phosphate + NADP(+) = dihydroxyacetone phosphate + NADPH + H(+). Its pathway is membrane lipid metabolism; glycerophospholipid metabolism. Its function is as follows. Catalyzes the NAD(P)H-dependent reduction of dihydroxyacetonephosphate (DHAP or glycerone phosphate) to glycerol 1-phosphate (G1P). The G1P thus generated is used as the glycerophosphate backbone of phospholipids in the cellular membranes of Archaea. This is Glycerol-1-phosphate dehydrogenase [NAD(P)+] from Methanosarcina barkeri (strain Fusaro / DSM 804).